Here is a 392-residue protein sequence, read N- to C-terminus: Formate-dependent phosphoribosylglycinamide formyltransferase (392 aa).

N(1)-(5-phospho-beta-D-ribosyl)glycinamide is bound by residues 22-23 (EL) and glutamate 82. Residues arginine 114, lysine 155, 160–165 (SSGKGQ), 195–198 (EKII), and glutamate 203 contribute to the ATP site. Residues 119 to 308 (VLVSKKLNIL…EFALHVRSFL (190 aa)) enclose the ATP-grasp domain. Mg(2+) contacts are provided by glutamate 267 and glutamate 279. N(1)-(5-phospho-beta-D-ribosyl)glycinamide contacts are provided by residues aspartate 286, lysine 355, and 362-363 (RR).

Belongs to the PurK/PurT family. In terms of assembly, homodimer.

It carries out the reaction N(1)-(5-phospho-beta-D-ribosyl)glycinamide + formate + ATP = N(2)-formyl-N(1)-(5-phospho-beta-D-ribosyl)glycinamide + ADP + phosphate + H(+). It functions in the pathway purine metabolism; IMP biosynthesis via de novo pathway; N(2)-formyl-N(1)-(5-phospho-D-ribosyl)glycinamide from N(1)-(5-phospho-D-ribosyl)glycinamide (formate route): step 1/1. Its function is as follows. Involved in the de novo purine biosynthesis. Catalyzes the transfer of formate to 5-phospho-ribosyl-glycinamide (GAR), producing 5-phospho-ribosyl-N-formylglycinamide (FGAR). Formate is provided by PurU via hydrolysis of 10-formyl-tetrahydrofolate. In Wigglesworthia glossinidia brevipalpis, this protein is Formate-dependent phosphoribosylglycinamide formyltransferase.